The sequence spans 925 residues: GPI ethanolamine phosphate transferase 1 (925 aa).

Topologically, residues 1 to 6 (MWNKHR) are cytoplasmic. A helical membrane pass occupies residues 7–27 (LAFILVGLLFHLFYLRSIFDI). The Lumenal segment spans residues 28-457 (YFVSPLVHGM…TTYNWRFIRS (430 aa)). N-linked (GlcNAc...) asparagine glycans are attached at residues Asn-90, Asn-138, Asn-198, Asn-286, Asn-312, and Asn-358. A helical membrane pass occupies residues 458-478 (IVTLGFIGWITYSFTIFLRLF). At 479-492 (ILEKQYAMKTSPQN) the chain is on the cytoplasmic side. Residues 493–510 (LASFGALTAALNYVLYYQ) traverse the membrane as a helical segment. The Lumenal portion of the chain corresponds to 511-516 (RSPFNY). The chain crosses the membrane as a helical span at residues 517-537 (YMYLLFPLFFWSQILTNSTIL). Over 538 to 547 (HDGIREMFKG) the chain is Cytoplasmic. A helical membrane pass occupies residues 548 to 568 (VSMLQRIGICALIVSIYEGIV). Over 569–574 (YGYFDR) the chain is Lumenal. The chain crosses the membrane as a helical span at residues 575–595 (WIFTIIFNLLALYPFFCGIKD). The Cytoplasmic segment spans residues 596 to 599 (AKTN). Residues 600–620 (MFWGANSMALSIFTLFDAVKI) traverse the membrane as a helical segment. Position 621 (Glu-621) is a topological domain, lumenal. Residues 622 to 642 (SLTQINVSGLLLVASGLYALW) traverse the membrane as a helical segment. At 643 to 653 (RVSKKINSHTK) the chain is on the cytoplasmic side. The helical transmembrane segment at 654–674 (IVILLQILLLAMMLAVTNKSV) threads the bilayer. Residues 675–687 (TSLQQRAGLPTDA) lie on the Lumenal side of the membrane. Residues 688–708 (KIAGWVILTLSLSLMPLLHYL) form a helical membrane-spanning segment. The Cytoplasmic segment spans residues 709-719 (KPSNDYQVRVL). A helical membrane pass occupies residues 720–740 (VIYLTFAPTFLILTISFESFF). At 741 to 775 (YLLFTNYLMLWIEIESKIKAQNIAKNSQNWLQLLR) the chain is on the lumenal side. A helical membrane pass occupies residues 776-796 (ISIIGFFLLQFAFFGTGNVAS). The Cytoplasmic portion of the chain corresponds to 797–818 (ISSFSLDSVYRLMPVFDPFPMG). A helical membrane pass occupies residues 819-839 (ALLILKIMIPYILLSTALGIM). Residues 840–848 (NLKLNIKDY) lie on the Lumenal side of the membrane. The chain crosses the membrane as a helical span at residues 849–869 (TVSSLILSTSDVLSLNFFYLL). Over 870–885 (RTEGSWLDIGVTISNY) the chain is Cytoplasmic. A helical membrane pass occupies residues 886–906 (CLAILSSLFMIVLELFSHFLL). The Lumenal segment spans residues 907–925 (KNVRDNGMDIAASKQQKRH).

It belongs to the PIGG/PIGN/PIGO family. PIGN subfamily.

The protein resides in the endoplasmic reticulum membrane. Its pathway is glycolipid biosynthesis; glycosylphosphatidylinositol-anchor biosynthesis. Ethanolamine phosphate transferase involved in glycosylphosphatidylinositol-anchor biosynthesis. Transfers ethanolamine phosphate to the first alpha-1,4-linked mannose of the glycosylphosphatidylinositol precursor of GPI-anchor. This chain is GPI ethanolamine phosphate transferase 1 (MCD4), found in Eremothecium gossypii (strain ATCC 10895 / CBS 109.51 / FGSC 9923 / NRRL Y-1056) (Yeast).